Reading from the N-terminus, the 226-residue chain is Probable endolytic peptidoglycan transglycosylase RlpA (226 aa).

The first 26 residues, 1 to 26 (MERFLGFRTPLGALGVVILLTLILSS), serve as a signal peptide directing secretion. Cys-27 is lipidated: N-palmitoyl cysteine. The S-diacylglycerol cysteine moiety is linked to residue Cys-27.

It belongs to the RlpA family.

Its subcellular location is the cell membrane. In terms of biological role, lytic transglycosylase with a strong preference for naked glycan strands that lack stem peptides. The protein is Probable endolytic peptidoglycan transglycosylase RlpA of Aquifex aeolicus (strain VF5).